The chain runs to 167 residues: Myelin basic protein (167 aa).

Residue Ala-1 is modified to N-acetylalanine. 2 positions are modified to phosphoserine: Ser-7 and Ser-12. Tyr-14 bears the Phosphotyrosine mark. Thr-17 bears the Phosphothreonine mark. The residue at position 19 (Ser-19) is a Phosphoserine. Thr-20 bears the Phosphothreonine mark. Citrulline is present on residues Arg-25 and Arg-31. Residue Thr-35 is modified to Phosphothreonine. Position 40 is a phosphoserine (Ser-40). Residues Arg-43 and Arg-49 each carry the omega-N-methylarginine modification. The interval 45–87 is induces experimental autoimmune encephalomyelitis (EAE) 1; the sequence is FGSDRAAPKRGSGKDSHHAARTTHYGSLPQKSQRSQDENPVVH. The disordered stretch occupies residues 46-114; the sequence is GSDRAAPKRG…GRGLSLSRFS (69 aa). Ser-56 bears the Phosphoserine mark. A Phosphothreonine modification is found at Thr-67. Tyr-69 carries the phosphotyrosine modification. Position 76 is a phosphoserine (Ser-76). Phosphothreonine occurs at positions 94 and 97. Deamidated glutamine is present on Gln-102. Position 106 is an omega-N-methylarginine; alternate (Arg-106). Arg-106 bears the Symmetric dimethylarginine; alternate mark. A Phosphoserine modification is found at Ser-114. An induces experimental autoimmune encephalomyelitis (EAE) 2 region spans residues 114 to 122; it reads SWGAEGQKP. The residue at position 121 (Lys-121) is an N6-acetyllysine. Arg-129 carries the post-translational modification Citrulline. The interval 136–167 is disordered; the sequence is GFKGAHDAQGTLSKIFKLGGRDSRSGSPMARR. Gln-144 bears the Deamidated glutamine mark. Arg-156 is subject to Citrulline. Ser-158 bears the Phosphoserine mark. Ser-162 is modified (phosphoserine; by UHMK1). Arg-167 is modified (citrulline).

The protein belongs to the myelin basic protein family. Homodimer. At least 5 charge isomers; C1 (the most cationic, least modified, and most abundant form), C2, C3, C4 and C5 (the least cationic form); are produced as a result of optional post-translational modifications such as phosphorylation of serine or threonine residues, deamidation of glutamine or asparagine residues, citrullination and methylation of arginine residues. C1 and C2 are unphosphorylated, C3 and C4 are monophosphorylated and C5 is phosphorylated at two positions. Post-translationally, phosphorylated by TAOK2, VRK2, MAPK11, MAPK12, MAPK14 and MINK1. In terms of processing, proteolytically cleaved in B cell lysosomes by cathepsin CTSG which degrades the major immunogenic MBP epitope and prevents the activation of MBP-specific autoreactive T cells. Found in both the central and the peripheral nervous system.

The protein localises to the myelin membrane. In terms of biological role, is, with PLP, the most abundant protein component of the myelin membrane in the CNS. Has a role in both the formation and stabilization of this compact multilayer arrangement of bilayers. Each splice variant and charge isomer may have a specialized function in the assembly of an optimized, biochemically functional myelin membrane. The chain is Myelin basic protein (MBP) from Cavia porcellus (Guinea pig).